Consider the following 360-residue polypeptide: Phospho-N-acetylmuramoyl-pentapeptide-transferase (360 aa).

The next 10 membrane-spanning stretches (helical) occupy residues 21 to 41 (YLTFRSVLALLTALLLSLWIG), 73 to 93 (TMGGLMILATITVSTLLWGDL), 94 to 114 (SNPYIWFSLFVLLGYGAIGFV), 132 to 152 (WKYFWLSLVSLIAIFGMYALG), 168 to 188 (IMPQLGLFYVVLAYFVIVGTS), 199 to 219 (GLAIMPTVFVAGAFAIIAWAT), 239 to 259 (LVIFCTAIVGAGLGFLWFNTY), 263 to 283 (VFMGDVGSLALGGALGTIAVL), 288 to 308 (FLLVIMGGVFVMETVSVILQV), and 338 to 358 (VIIRFWIISLMLVLFGLVTLK).

Belongs to the glycosyltransferase 4 family. MraY subfamily. Mg(2+) is required as a cofactor.

Its subcellular location is the cell inner membrane. It catalyses the reaction UDP-N-acetyl-alpha-D-muramoyl-L-alanyl-gamma-D-glutamyl-meso-2,6-diaminopimeloyl-D-alanyl-D-alanine + di-trans,octa-cis-undecaprenyl phosphate = di-trans,octa-cis-undecaprenyl diphospho-N-acetyl-alpha-D-muramoyl-L-alanyl-D-glutamyl-meso-2,6-diaminopimeloyl-D-alanyl-D-alanine + UMP. Its pathway is cell wall biogenesis; peptidoglycan biosynthesis. In terms of biological role, catalyzes the initial step of the lipid cycle reactions in the biosynthesis of the cell wall peptidoglycan: transfers peptidoglycan precursor phospho-MurNAc-pentapeptide from UDP-MurNAc-pentapeptide onto the lipid carrier undecaprenyl phosphate, yielding undecaprenyl-pyrophosphoryl-MurNAc-pentapeptide, known as lipid I. The polypeptide is Phospho-N-acetylmuramoyl-pentapeptide-transferase (Mannheimia succiniciproducens (strain KCTC 0769BP / MBEL55E)).